The sequence spans 350 residues: Protein RecA (350 aa).

Position 68–75 (68–75 (GPESSGKT)) interacts with ATP.

Belongs to the RecA family.

The protein resides in the cytoplasm. In terms of biological role, can catalyze the hydrolysis of ATP in the presence of single-stranded DNA, the ATP-dependent uptake of single-stranded DNA by duplex DNA, and the ATP-dependent hybridization of homologous single-stranded DNAs. It interacts with LexA causing its activation and leading to its autocatalytic cleavage. The protein is Protein RecA of Symbiobacterium thermophilum (strain DSM 24528 / JCM 14929 / IAM 14863 / T).